We begin with the raw amino-acid sequence, 82 residues long: Putative membrane protein insertion efficiency factor (82 aa).

Belongs to the UPF0161 family.

The protein localises to the cell inner membrane. Could be involved in insertion of integral membrane proteins into the membrane. This Rickettsia peacockii (strain Rustic) protein is Putative membrane protein insertion efficiency factor.